The sequence spans 140 residues: Chorion class A protein Ld2/Ld41 (140 aa).

The first 21 residues, 1–21 (MNSFALLLVCIQACLVQSVFS), serve as a signal peptide directing secretion.

Belongs to the chorion protein family.

Its function is as follows. This protein is one of many from the eggshell of the gypsy moth. This Lymantria dispar (Gypsy moth) protein is Chorion class A protein Ld2/Ld41.